The following is a 371-amino-acid chain: Maltose/maltodextrin import ATP-binding protein MalK (371 aa).

An ABC transporter domain is found at 4-234; the sequence is VQLQNVTKAW…PADRFVAGFI (231 aa). 36 to 43 serves as a coordination point for ATP; sequence GPSGCGKS.

It belongs to the ABC transporter superfamily. Maltooligosaccharide importer (TC 3.A.1.1.1) family. The complex is composed of two ATP-binding proteins (MalK), two transmembrane proteins (MalG and MalK) and a solute-binding protein (MalE).

The protein localises to the cell inner membrane. The catalysed reaction is D-maltose(out) + ATP + H2O = D-maltose(in) + ADP + phosphate + H(+). Part of the ABC transporter complex MalEFGK involved in maltose/maltodextrin import. Responsible for energy coupling to the transport system. The polypeptide is Maltose/maltodextrin import ATP-binding protein MalK (Escherichia coli O6:K15:H31 (strain 536 / UPEC)).